The following is a 101-amino-acid chain: Gibberellin-regulated protein 6 (101 aa).

A signal peptide spans 1–23; the sequence is MAKLITSFLLLTILFTFVCLTMS.

The protein belongs to the GASA family. Six disulfide bonds may be present.

It is found in the secreted. Gibberellin-regulated protein that may function in hormonal controlled steps of development such as seed germination, flowering and seed maturation. The chain is Gibberellin-regulated protein 6 (GASA6) from Arabidopsis thaliana (Mouse-ear cress).